Consider the following 344-residue polypeptide: Protein L-Myc-1-A (344 aa).

Disordered regions lie at residues R100–I162 and P209–V261. Composition is skewed to polar residues over residues T102–Q112, P123–N133, and P236–S255. A bHLH domain is found at V261–L313. The segment at L313–L341 is leucine-zipper.

In terms of assembly, efficient DNA binding requires dimerization with another bHLH protein. Binds DNA as a heterodimer with MAX. High levels in oocytes, modest levels in kidney and low levels in spleen.

It localises to the nucleus. The sequence is that of Protein L-Myc-1-A (mycl1-a) from Xenopus laevis (African clawed frog).